The chain runs to 1116 residues: Electrogenic sodium bicarbonate cotransporter 4 (1116 aa).

Residues 1 to 14 (MKVDEEKAGVKKLD) are compositionally biased toward basic and acidic residues. Disordered stretches follow at residues 1–92 (MKVD…TRSP), 222–257 (PIHR…STED), and 431–467 (PGQM…SGDE). The Cytoplasmic portion of the chain corresponds to 1 to 515 (MKVDEEKAGV…YDGFHLQSIS (515 aa)). Low complexity predominate over residues 233–247 (SVSTTNRSSARSSSA). A compositionally biased stretch (gly residues) spans 437 to 464 (SVGGGGASAGGGGSGGGAGGSGAGGVGS). A helical membrane pass occupies residues 516 to 536 (AVLFIYLGCITNAITFGGLLG). Over 537–558 (DATDNYQGVMESFLGTAMAGSL) the chain is Extracellular. The chain crosses the membrane as a helical span at residues 559 to 579 (FCLFSGQPLIILSSTGPILIF). Topologically, residues 580–600 (EKLLFDFSKANGLDYMEFRLW) are cytoplasmic. Residues 601-621 (IGLHSAIQCLILVATDASFII) form a helical membrane-spanning segment. At 622–631 (KYITRFTEEG) the chain is on the extracellular side. A helical transmembrane segment spans residues 632 to 652 (FSTLISFIFIYDAIKKMIGAF). Residues 653–730 (KYYPINTDFK…GGRLLGSSCQ (78 aa)) lie on the Cytoplasmic side of the membrane. Residues 731 to 751 (FVPDLALMSFILFFGTYSMTL) form a helical membrane-spanning segment. Residues 752-768 (TLKKFKFSRYFPTKVRT) lie on the Extracellular side of the membrane. The helical transmembrane segment at 769–789 (LVADFSIVFSILLFCGIDACF) threads the bilayer. Topologically, residues 790 to 819 (GLQTPKLHVPSVIKPTRPDRGWFVAPFGKN) are cytoplasmic. A helical membrane pass occupies residues 820-840 (PWWVYPASILPALLVTILIFM). Residues 841–865 (DQQITAVIVNRKENKLRKAAGYHLD) lie on the Extracellular side of the membrane. Residues 866–886 (LFWVGILMALCSFTGLPWYVA) form a helical membrane-spanning segment. Topologically, residues 887 to 922 (ATVISIAHIDSLKMETETSAPGEQPQFLGVREQRVT) are cytoplasmic. Residues 923-943 (GVMVFILTGISVFLAPILKYI) form a helical membrane-spanning segment. Residues 944-945 (PM) are Extracellular-facing. The helical transmembrane segment at 946-966 (PVLYGVFLYMGVASLNGIQFW) threads the bilayer. Topologically, residues 967-987 (ERCKLFLMPAKHQPDHAFLRH) are cytoplasmic. Transmembrane regions (helical) follow at residues 988-1008 (VPLR…ALLW) and 1009-1029 (ILKS…LIIV). At 1030–1116 (RRLLDLIFSQ…KRSSSWSYSL (87 aa)) the chain is on the cytoplasmic side.

Belongs to the anion exchanger (TC 2.A.31) family.

It localises to the apical cell membrane. The protein resides in the basolateral cell membrane. The catalysed reaction is 2 hydrogencarbonate(out) + Na(+)(out) = 2 hydrogencarbonate(in) + Na(+)(in). It catalyses the reaction 3 hydrogencarbonate(out) + Na(+)(out) = 3 hydrogencarbonate(in) + Na(+)(in). Mediates sodium- and bicarbonate-dependent electrogenic sodium bicarbonate cotransport, with a Na(+):HCO3(-) stoichiometry varying from 1:2 to 1:3. The protein is Electrogenic sodium bicarbonate cotransporter 4 (Slc4a5) of Mus musculus (Mouse).